We begin with the raw amino-acid sequence, 337 residues long: MISLKSIVDKLYNLEDLSYQESYQLFDYFIKGQIELPSQTSILTALKLKKETSIEIAAAVEALFDNTKEFPKIKGDLAGIVGTGGDGFNTINISTTAAIVAATAGYKVAKHGGRSVSSKSGSFDLLESFGVNIELAPDQTKQCLELYNLGFLFVPFYSDGFRHIKEARTILKTRTIFNILGPLINPARPNKVVIGVYSKDLILPMAKTLVNLGIDRAVVVYGSGLDEVAIHDDTYVAEIQNNQIIEYKVSPVDFGIDTYAIKDLEGGLPEQNREIIKQILLGKGKEAHNAAVAVNVAMLMKLYDKDDLKQNTQEVLEIIKSGKCFNTLQQVINYSNK.

5-phospho-alpha-D-ribose 1-diphosphate-binding positions include G82, 85 to 86 (GD), T90, 92 to 95 (NIST), 110 to 118 (KHGGRSVSS), and S122. Anthranilate is bound at residue G82. Residue S94 coordinates Mg(2+). R168 contacts anthranilate. D226 and E227 together coordinate Mg(2+).

The protein belongs to the anthranilate phosphoribosyltransferase family. In terms of assembly, homodimer. Mg(2+) serves as cofactor.

The catalysed reaction is N-(5-phospho-beta-D-ribosyl)anthranilate + diphosphate = 5-phospho-alpha-D-ribose 1-diphosphate + anthranilate. It functions in the pathway amino-acid biosynthesis; L-tryptophan biosynthesis; L-tryptophan from chorismate: step 2/5. Catalyzes the transfer of the phosphoribosyl group of 5-phosphorylribose-1-pyrophosphate (PRPP) to anthranilate to yield N-(5'-phosphoribosyl)-anthranilate (PRA). This chain is Anthranilate phosphoribosyltransferase, found in Francisella tularensis subsp. mediasiatica (strain FSC147).